A 318-amino-acid chain; its full sequence is NLP effector protein 7 (318 aa).

Positions 1–19 are cleaved as a signal peptide; that stretch reads MRLFAFLWSSVAFLSTVQA. The segment covering 23 to 41 has biased composition (low complexity); it reads QTASQTQDDSSTPTPTPTD. Disordered stretches follow at residues 23-42 and 51-96; these read QTASQTQDDSSTPTPTPTDK and RTKT…TPDP. The span at 55–65 shows a compositional bias: polar residues; it reads PMATPNRTIMP. N60 is a glycosylation site (N-linked (GlcNAc...) asparagine). The segment covering 73 to 96 has biased composition (pro residues); that stretch reads TEPPTPEPTYLPTPSPTPAPTPDP. Residues 185–195 carry the Conserved undecapeptide motif I motif; sequence AIMYSWYFPKD. The Hepta-peptide GHRHDWE motif II signature appears at 202–208; that stretch reads GHRHDWE.

The protein belongs to the Necrosis inducing protein (NPP1) family.

It is found in the secreted. In terms of biological role, secreted effector that contributes moderately to virulence during infection by P.capsici. Does not cause visible reaction of C.annuum for several days after inoculation, but by 7 days after inoculation, small necrotic lesions become visible. Leads only to chlorotic areas, without necrosis at 7 days after non-host N.benthamiana leaves infection. In Phytophthora capsici, this protein is NLP effector protein 7.